A 58-amino-acid polypeptide reads, in one-letter code: Dortoxin (58 aa).

One can recognise an LCN-type CS-alpha/beta domain in the interval 3 to 58; it reads VPGNYPLDKDGNTYTCLKLGENKDCQKVCKLHGVQYGYCYAFECWCKEYLDDKDSV. 3 disulfides stabilise this stretch: cysteine 18-cysteine 41, cysteine 27-cysteine 46, and cysteine 31-cysteine 48.

In terms of tissue distribution, expressed by the venom gland.

The protein localises to the secreted. Functionally, binds to sodium channels (Nav) and affects the channel activation process. In mice, causes hyperactivity that persists until death. In Parabuthus transvaalicus (Transvaal thick-tailed scorpion), this protein is Dortoxin.